A 956-amino-acid chain; its full sequence is Bromodomain testis-specific protein (956 aa).

The Bromo 1 domain maps to 26-132 (RLTNQLQFLQ…KLFMQKLSQM (107 aa)). S186 carries the post-translational modification Phosphoserine. The Nuclear localization signal motif lies at 208–219 (KGVKRRADTTTP). The interval 210-239 (VKRRADTTTPTTSIAKASSESPPTLRETKP) is disordered. The segment covering 216-231 (TTTPTTSIAKASSESP) has biased composition (polar residues). The region spanning 266-375 (VKVTEQLKHC…DVFELHFAKI (110 aa)) is the Bromo 2 domain. Disordered stretches follow at residues 391-420 (NSAQALSRESSSEASSGDASSEDSEDERVQ), 442-508 (VPLR…PMNY), 607-747 (NQLN…HSQQ), and 859-934 (LEHN…RREA). Residues 392–409 (SAQALSRESSSEASSGDA) show a composition bias toward low complexity. Residues 417 to 442 (ERVQHLAKLQEQLNAVHQQLQVLSQV) are a coiled coil. The segment covering 445–463 (RKLKKKNEKSKRAPKRKKV) has biased composition (basic residues). In terms of domain architecture, NET spans 496–578 (KSEEEDNAKP…ACLRKRSLKP (83 aa)). Over residues 625-640 (PPPPPPPPPPPPPPPE) the composition is skewed to pro residues. Low complexity predominate over residues 649–688 (DSSSSSGSGSGSSSSSSGSSSSSSSSGSASSSSDSSSSDS). Positions 714–724 (KQIQSSVQDIT) are enriched in polar residues. Positions 844-940 (EKEVKARTQE…RREAMAGTID (97 aa)) form a coiled coil. Basic and acidic residues-rich tracts occupy residues 859 to 874 (LEHNAKDPKVSQENQR) and 915 to 934 (LLKDRNLAREKEQERRRREA).

The protein belongs to the BET family. In terms of assembly, interacts with SMARCE1. Interacts with mRNA splicing machinery proteins SRSF2, DDX5, HNRNPK and TARDBP. Interacts with the acetylated N-terminus of histone H1, H2, H3 and H4. Interacts with P-TEFb components CDK9 and CCNT1/cyclin-T1. Ubiquitinated in a SPOP-dependent manner, leading to proteasomal degradation. In terms of tissue distribution, testis-specific. Expressed in germinal cells from the early meiotic (pachytene) spermatocytes and during spermiogenesis in the round and elongating spermatids until the condensed late spermatids. No expression seen in spermatogonia.

The protein localises to the nucleus. Testis-specific chromatin protein that specifically binds histone H4 acetylated at 'Lys-5' and 'Lys-8' (H4K5ac and H4K8ac, respectively) and plays a key role in spermatogenesis. Required in late pachytene spermatocytes: plays a role in meiotic and post-meiotic cells by binding to acetylated histones at the promoter of specific meiotic and post-meiotic genes, facilitating their activation at the appropriate time. In the post-meiotic phase of spermatogenesis, binds to hyperacetylated histones and participates in their general removal from DNA. Also recognizes and binds a subset of butyrylated histones: able to bind histone H4 butyrylated at 'Lys-8' (H4K8ac), while it is not able to bind H4 butyrylated at 'Lys-5' (H4K5ac). Also acts as a component of the splicing machinery in pachytene spermatocytes and round spermatids and participates in 3'-UTR truncation of specific mRNAs in post-meiotic spermatids. Required for chromocenter organization, a structure comprised of peri-centromeric heterochromatin. In Mus musculus (Mouse), this protein is Bromodomain testis-specific protein (Brdt).